Reading from the N-terminus, the 310-residue chain is Ribonuclease Z (310 aa).

Residues His64, His66, Asp68, His69, His142, Asp213, and His271 each contribute to the Zn(2+) site. Catalysis depends on Asp68, which acts as the Proton acceptor.

Belongs to the RNase Z family. As to quaternary structure, homodimer. It depends on Zn(2+) as a cofactor.

It carries out the reaction Endonucleolytic cleavage of RNA, removing extra 3' nucleotides from tRNA precursor, generating 3' termini of tRNAs. A 3'-hydroxy group is left at the tRNA terminus and a 5'-phosphoryl group is left at the trailer molecule.. Functionally, zinc phosphodiesterase, which displays some tRNA 3'-processing endonuclease activity. Probably involved in tRNA maturation, by removing a 3'-trailer from precursor tRNA. This chain is Ribonuclease Z, found in Treponema pallidum (strain Nichols).